Reading from the N-terminus, the 60-residue chain is Large ribosomal subunit protein bL32 (60 aa).

Residues 1 to 46 are disordered; the sequence is MAVQQNKKSPSKRGMHRSHNALNTPGTAIEPTTGEVHLRHHISPTG. The span at 9–19 shows a compositional bias: basic residues; sequence SPSKRGMHRSH.

Belongs to the bacterial ribosomal protein bL32 family.

The chain is Large ribosomal subunit protein bL32 from Leptothrix cholodnii (strain ATCC 51168 / LMG 8142 / SP-6) (Leptothrix discophora (strain SP-6)).